Reading from the N-terminus, the 210-residue chain is Large ribosomal subunit protein uL4 (210 aa).

The disordered stretch occupies residues 44–77 (ARQGNASSKTRSEVRGGGRKPWRQKGTGRARAGS). Over residues 60 to 71 (GGRKPWRQKGTG) the composition is skewed to basic residues.

Belongs to the universal ribosomal protein uL4 family. As to quaternary structure, part of the 50S ribosomal subunit.

One of the primary rRNA binding proteins, this protein initially binds near the 5'-end of the 23S rRNA. It is important during the early stages of 50S assembly. It makes multiple contacts with different domains of the 23S rRNA in the assembled 50S subunit and ribosome. Functionally, forms part of the polypeptide exit tunnel. In Microcystis aeruginosa (strain NIES-843 / IAM M-2473), this protein is Large ribosomal subunit protein uL4.